We begin with the raw amino-acid sequence, 317 residues long: Ribosomal protein L11 methyltransferase (317 aa).

S-adenosyl-L-methionine is bound by residues Thr-158, Gly-179, Asp-201, and Asn-244.

The protein belongs to the methyltransferase superfamily. PrmA family.

Its subcellular location is the cytoplasm. It catalyses the reaction L-lysyl-[protein] + 3 S-adenosyl-L-methionine = N(6),N(6),N(6)-trimethyl-L-lysyl-[protein] + 3 S-adenosyl-L-homocysteine + 3 H(+). Functionally, methylates ribosomal protein L11. This Streptococcus pyogenes serotype M12 (strain MGAS2096) protein is Ribosomal protein L11 methyltransferase.